A 278-amino-acid chain; its full sequence is Large ribosomal subunit protein uL2 (278 aa).

Disordered stretches follow at residues P29 to G53 and R221 to R278. Residues I269–R278 are compositionally biased toward basic residues.

This sequence belongs to the universal ribosomal protein uL2 family. Part of the 50S ribosomal subunit. Forms a bridge to the 30S subunit in the 70S ribosome.

In terms of biological role, one of the primary rRNA binding proteins. Required for association of the 30S and 50S subunits to form the 70S ribosome, for tRNA binding and peptide bond formation. It has been suggested to have peptidyltransferase activity; this is somewhat controversial. Makes several contacts with the 16S rRNA in the 70S ribosome. The chain is Large ribosomal subunit protein uL2 from Erythrobacter litoralis (strain HTCC2594).